The chain runs to 178 residues: Single-stranded DNA-binding protein DdrB (178 aa).

The disordered stretch occupies residues 139-178; the sequence is RYAVPGSNRPQAGAPARSAATRAQGARPGAVAVQDEETPF. Residues 147–165 are compositionally biased toward low complexity; it reads RPQAGAPARSAATRAQGAR.

As to quaternary structure, homopentamer; arranged in a ring-structure.

In terms of biological role, ssDNA-binding protein that probably contributes to the ionizing radiation resistance of D.geothermalis. Plays a role in DNA repair and genome reconstitution, in a RecA-independent process, and is necessary for recovery from severe genomic fragmentation as a result of exposure to severe levels of ionizing radiation. Binds single-stranded DNA but not duplex DNA. The polypeptide is Single-stranded DNA-binding protein DdrB (ddrB) (Deinococcus geothermalis (strain DSM 11300 / CIP 105573 / AG-3a)).